A 97-amino-acid polypeptide reads, in one-letter code: Putative pterin-4-alpha-carbinolamine dehydratase (97 aa).

The protein belongs to the pterin-4-alpha-carbinolamine dehydratase family.

The enzyme catalyses (4aS,6R)-4a-hydroxy-L-erythro-5,6,7,8-tetrahydrobiopterin = (6R)-L-erythro-6,7-dihydrobiopterin + H2O. The sequence is that of Putative pterin-4-alpha-carbinolamine dehydratase from Phenylobacterium zucineum (strain HLK1).